Here is a 338-residue protein sequence, read N- to C-terminus: Glycerol-3-phosphate dehydrogenase [NAD(P)+] (338 aa).

NADPH-binding residues include W11, R30, and K107. Sn-glycerol 3-phosphate is bound by residues K107, G140, and S142. A144 is a binding site for NADPH. Residues K195, D248, S258, R259, and N260 each coordinate sn-glycerol 3-phosphate. K195 acts as the Proton acceptor in catalysis. Residue R259 coordinates NADPH. Residues V283 and E285 each coordinate NADPH.

Belongs to the NAD-dependent glycerol-3-phosphate dehydrogenase family.

It localises to the cytoplasm. The enzyme catalyses sn-glycerol 3-phosphate + NAD(+) = dihydroxyacetone phosphate + NADH + H(+). It carries out the reaction sn-glycerol 3-phosphate + NADP(+) = dihydroxyacetone phosphate + NADPH + H(+). It functions in the pathway membrane lipid metabolism; glycerophospholipid metabolism. Functionally, catalyzes the reduction of the glycolytic intermediate dihydroxyacetone phosphate (DHAP) to sn-glycerol 3-phosphate (G3P), the key precursor for phospholipid synthesis. This Ralstonia nicotianae (strain ATCC BAA-1114 / GMI1000) (Ralstonia solanacearum) protein is Glycerol-3-phosphate dehydrogenase [NAD(P)+].